A 355-amino-acid polypeptide reads, in one-letter code: Inositol-tetrakisphosphate 1-kinase 4 (355 aa).

Residue lysine 65 participates in 1D-myo-inositol 1,3,4-trisphosphate binding. 2 residues coordinate ATP: arginine 101 and lysine 146. In terms of domain architecture, ATP-grasp spans 107 to 318 (VVSGLRTPVS…FFLEMLRGTR (212 aa)). Residues histidine 157 and lysine 190 each coordinate 1D-myo-inositol 1,3,4-trisphosphate. Residues 179–190 (QEFVNHGGVLFK) and serine 205 each bind ATP. The interval 225–248 (FANISNQPLPPPDDDGGAADDDTP) is disordered. Over residues 236–247 (PDDDGGAADDDT) the composition is skewed to acidic residues. Residues aspartate 272, aspartate 289, and asparagine 291 each contribute to the Mg(2+) site. Position 291 (asparagine 291) interacts with 1D-myo-inositol 1,3,4-trisphosphate.

This sequence belongs to the ITPK1 family. Monomer. It depends on Mg(2+) as a cofactor.

It catalyses the reaction 1D-myo-inositol 3,4,5,6-tetrakisphosphate + ATP = 1D-myo-inositol 1,3,4,5,6-pentakisphosphate + ADP + H(+). It carries out the reaction 1D-myo-inositol 1,3,4-trisphosphate + ATP = 1D-myo-inositol 1,3,4,5-tetrakisphosphate + ADP + H(+). The enzyme catalyses 1D-myo-inositol 1,3,4-trisphosphate + ATP = 1D-myo-inositol 1,3,4,6-tetrakisphosphate + ADP + H(+). In terms of biological role, kinase that can phosphorylate various inositol polyphosphate such as Ins(3,4,5,6)P4 or Ins(1,3,4)P3 and participates in phytic acid biosynthesis in developing seeds. Phytic acid is the primary storage form of phosphorus in cereal grains and other plant seeds. The protein is Inositol-tetrakisphosphate 1-kinase 4 (ITPK4) of Oryza sativa subsp. indica (Rice).